Here is a 274-residue protein sequence, read N- to C-terminus: Large ribosomal subunit protein uL2 (274 aa).

Disordered stretches follow at residues 28–53 (KPYAPLLEKNSKSGGRNNNGRITVRH) and 223–274 (VAMN…RRTK). Over residues 39-48 (KSGGRNNNGR) the composition is skewed to low complexity. A compositionally biased stretch (basic residues) spans 254-274 (KGAKTRKNKRTDKFIVRRRTK).

The protein belongs to the universal ribosomal protein uL2 family. As to quaternary structure, part of the 50S ribosomal subunit. Forms a bridge to the 30S subunit in the 70S ribosome.

Its function is as follows. One of the primary rRNA binding proteins. Required for association of the 30S and 50S subunits to form the 70S ribosome, for tRNA binding and peptide bond formation. It has been suggested to have peptidyltransferase activity; this is somewhat controversial. Makes several contacts with the 16S rRNA in the 70S ribosome. This Pseudoalteromonas translucida (strain TAC 125) protein is Large ribosomal subunit protein uL2.